The sequence spans 213 residues: High frequency lysogenization protein HflD (213 aa).

Residues 79–126 (QGLNAELTRYTLSLMVLERKLSSAKGALDTLGNRINGLQRQLEHFDLQ) are a coiled coil.

It belongs to the HflD family. In terms of assembly, interacts with CII protein from phage lambda.

It is found in the cytoplasm. The protein resides in the cell inner membrane. In terms of biological role, negative regulator of phage lambda lysogenization. Contributes to the degradation of the phage regulatory protein CII. Acts probably by holding CII on the membrane surface, away from the target promoters, but close to the FtsH protease. The chain is High frequency lysogenization protein HflD from Escherichia coli O127:H6 (strain E2348/69 / EPEC).